Consider the following 333-residue polypeptide: MEATDIWGEIERSESYLVCSMYEEAESLSSSILKRIFGNIDVLSDEASQGDHQFHDMLESAGMVLVQSLHGIGRTVEIVNELRDVFGEVAAIPVQVLLTGVCLQISNGSYLGVRDILEEFFRIWVYKDNHYILNDAGVSTKGFHAKNCLDIDEYMEVVELYTFGVLAKFSNDMGLAISWVEKAALPEERRQGILRRLHSLLSLKTASSFEENSKDSSYAVVNNKKSLGNEKNDEIDSFLKLSKQHEPWSLWSSHPLSLKVGNTQFSMSRGKVAVSLVGLIICYALKRKRAALIRIIRRQMESTRKAIVDFWKLAFSYQVNPLAAIQSIPSTTT.

Topologically, residues 1-90 (MEATDIWGEI…ELRDVFGEVA (90 aa)) are cytoplasmic. A helical membrane pass occupies residues 91–102 (AIPVQVLLTGVC). Over 103–268 (LQISNGSYLG…KVGNTQFSMS (166 aa)) the chain is Peroxisomal. Residues 269–285 (RGKVAVSLVGLIICYAL) traverse the membrane as a helical segment. At 286–333 (KRKRAALIRIIRRQMESTRKAIVDFWKLAFSYQVNPLAAIQSIPSTTT) the chain is on the cytoplasmic side.

In terms of assembly, interacts with PEX6 and PEX19-1, but not with PEX1. Interacts (via N-terminus) with PEX13, and (via N-terminus and C-terminus) with PEX16. Expressed in roots, leaves, stems, flowers, buds and fruits.

The protein localises to the peroxisome membrane. In terms of biological role, involved in peroxisome biogenesis and matrix protein import. Required for pollen maturation and in vivo germination via its role in peroxisomal function, which partially involves jasmonic acid biosynthesis. Transported to peroxisomes via the interaction with PEX19-1. Required for peroxisomal protein import by acting as an anchoring protein for the AAA ATPase complex, which consists of PEX1 and PEX6. The protein is Protein APEM9 of Arabidopsis thaliana (Mouse-ear cress).